We begin with the raw amino-acid sequence, 94 residues long: Co-chaperonin GroES (94 aa).

Belongs to the GroES chaperonin family. As to quaternary structure, heptamer of 7 subunits arranged in a ring. Interacts with the chaperonin GroEL.

It localises to the cytoplasm. Its function is as follows. Together with the chaperonin GroEL, plays an essential role in assisting protein folding. The GroEL-GroES system forms a nano-cage that allows encapsulation of the non-native substrate proteins and provides a physical environment optimized to promote and accelerate protein folding. GroES binds to the apical surface of the GroEL ring, thereby capping the opening of the GroEL channel. The polypeptide is Co-chaperonin GroES (Clostridioides difficile (strain 630) (Peptoclostridium difficile)).